Here is a 328-residue protein sequence, read N- to C-terminus: Flap endonuclease 1 (328 aa).

Positions 1–98 (MGVKLRDVVS…ETVSRRADIR (98 aa)) are N-domain. 7 residues coordinate Mg(2+): Asp27, Asp80, Glu152, Glu154, Asp173, Asp175, and Asp226. The segment at 116–247 (RAKKYAVRSS…RGLKLIREKG (132 aa)) is I-domain. Residues 320–328 (TQKSLEDWF) form an interaction with PCNA region.

Belongs to the XPG/RAD2 endonuclease family. FEN1 subfamily. Interacts with PCNA. PCNA stimulates the nuclease activity without altering cleavage specificity. The cofactor is Mg(2+).

In terms of biological role, structure-specific nuclease with 5'-flap endonuclease and 5'-3' exonuclease activities involved in DNA replication and repair. During DNA replication, cleaves the 5'-overhanging flap structure that is generated by displacement synthesis when DNA polymerase encounters the 5'-end of a downstream Okazaki fragment. Binds the unpaired 3'-DNA end and kinks the DNA to facilitate 5' cleavage specificity. Cleaves one nucleotide into the double-stranded DNA from the junction in flap DNA, leaving a nick for ligation. Also involved in the base excision repair (BER) pathway. Acts as a genome stabilization factor that prevents flaps from equilibrating into structures that lead to duplications and deletions. Also possesses 5'-3' exonuclease activity on nicked or gapped double-stranded DNA. This chain is Flap endonuclease 1, found in Methanothermobacter thermautotrophicus (strain ATCC 29096 / DSM 1053 / JCM 10044 / NBRC 100330 / Delta H) (Methanobacterium thermoautotrophicum).